Reading from the N-terminus, the 158-residue chain is Protein EOLA2 (158 aa).

The ASCH domain maps to 6-92 (LSFRQPYAGF…IAGLVDIGET (87 aa)).

The protein belongs to the EOLA family.

This chain is Protein EOLA2, found in Homo sapiens (Human).